The sequence spans 239 residues: Probable transcriptional regulatory protein Ajs_1898 (239 aa).

The segment at 1 to 21 (MAGHSKWANIQHRKGRQDEKR) is disordered.

It belongs to the TACO1 family.

It localises to the cytoplasm. The polypeptide is Probable transcriptional regulatory protein Ajs_1898 (Acidovorax sp. (strain JS42)).